Consider the following 113-residue polypeptide: Putative pterin-4-alpha-carbinolamine dehydratase (113 aa).

The protein belongs to the pterin-4-alpha-carbinolamine dehydratase family.

It catalyses the reaction (4aS,6R)-4a-hydroxy-L-erythro-5,6,7,8-tetrahydrobiopterin = (6R)-L-erythro-6,7-dihydrobiopterin + H2O. This chain is Putative pterin-4-alpha-carbinolamine dehydratase, found in Nitrosomonas europaea (strain ATCC 19718 / CIP 103999 / KCTC 2705 / NBRC 14298).